The primary structure comprises 465 residues: MKFLLVLVLLVSLQVSACGAAPMNESEFAEWYLSRFFDYQGDRIPMTKTKTNRNLLEEKLQEMQQFFGLEVTGQLDTSTLKIMHTSRCGVPDVQHLRAVPQRSRWMKRYLTYRIYNYTPDMKRADVDYIFQKAFQVWSDVTPLRFRKIHKGEADITILFAFGDHGDFYDFDGKGGTLAHAFYPGPGIQGDAHFDEAETWTKSFQGTNLFLVAVHELGHSLGLRHSNNPKSIMYPTYRYLHPNTFRLSADDIHSIQSLYGAPVKNPSLTNPGSPPSTVCHQSLSFDAVTTVGDKIFFFKDWFFWWRLPGSPATNITSISSMWPTIPSGIQAAYEIGGRNQLFLFKDEKYWLINNLVPEPHYPRSIHSLGFPASVKKIDAAVFDPLRQKVYFFVDKQYWRYDVRQELMDAAYPKLISTHFPGIRPKIDAVLYFKRHYYIFQGAYQLEYDPLLDRVTKTLSSTSWFGC.

The signal sequence occupies residues 1 to 21 (MKFLLVLVLLVSLQVSACGAA). A propeptide spans 22 to 101 (PMNESEFAEW…DVQHLRAVPQ (80 aa)) (activation peptide). Residues 86-93 (SRCGVPDV) carry the Cysteine switch motif. Cysteine 88 serves as a coordination point for Zn(2+). Aspartate 120 and aspartate 154 together coordinate Ca(2+). Zn(2+) is bound by residues histidine 164 and aspartate 166. The Ca(2+) site is built by aspartate 171, glycine 172, glycine 174, and threonine 176. A Zn(2+)-binding site is contributed by histidine 179. Residues glycine 186 and aspartate 190 each coordinate Ca(2+). Histidine 192 contributes to the Zn(2+) binding site. The Ca(2+) site is built by aspartate 194, glutamate 195, and glutamate 197. Histidine 214 is a Zn(2+) binding site. The active site involves glutamate 215. Zn(2+) contacts are provided by histidine 218 and histidine 224. Cysteine 278 and cysteine 465 are joined by a disulfide. Hemopexin repeat units follow at residues 281 to 324 (SLSF…WPTI), 325 to 371 (PSGI…GFPA), 373 to 421 (VKKI…FPGI), and 422 to 465 (RPKI…WFGC). Aspartate 285 contacts Ca(2+). Asparagine 313 carries N-linked (GlcNAc...) asparagine glycosylation. Residues aspartate 377 and aspartate 426 each coordinate Ca(2+).

It belongs to the peptidase M10A family. The cofactor is Ca(2+). Requires Zn(2+) as cofactor.

Its subcellular location is the secreted. The protein resides in the extracellular space. It localises to the extracellular matrix. The enzyme catalyses Hydrolysis of soluble and insoluble elastin. Specific cleavages are also produced at 14-Ala-|-Leu-15 and 16-Tyr-|-Leu-17 in the B chain of insulin.. Functionally, may be involved in tissue injury and remodeling. Has significant elastolytic activity. Can accept large and small amino acids at the P1' site, but has a preference for leucine. Aromatic or hydrophobic residues are preferred at the P1 site, with small hydrophobic residues (preferably alanine) occupying P3. In Rattus norvegicus (Rat), this protein is Macrophage metalloelastase (Mmp12).